Consider the following 207-residue polypeptide: Redox-sensing transcriptional repressor Rex (207 aa).

Residues 15–54 (LYYRCLNRLYEEGIEYVASKDIAERLGIKSSQVRKDLSYF) constitute a DNA-binding region (H-T-H motif). 89 to 94 (GAGNIG) is a binding site for NAD(+).

The protein belongs to the transcriptional regulatory Rex family. In terms of assembly, homodimer.

Its subcellular location is the cytoplasm. Its function is as follows. Modulates transcription in response to changes in cellular NADH/NAD(+) redox state. This is Redox-sensing transcriptional repressor Rex from Thermosipho africanus (strain TCF52B).